The sequence spans 129 residues: Mediator of RNA polymerase II transcription subunit 31-B (129 aa).

This sequence belongs to the Mediator complex subunit 31 family. As to quaternary structure, component of the Mediator complex.

The protein resides in the nucleus. Functionally, component of the Mediator complex, a coactivator involved in the regulated transcription of nearly all RNA polymerase II-dependent genes. Mediator functions as a bridge to convey information from gene-specific regulatory proteins to the basal RNA polymerase II transcription machinery. Mediator is recruited to promoters by direct interactions with regulatory proteins and serves as a scaffold for the assembly of a functional preinitiation complex with RNA polymerase II and the general transcription factors. This is Mediator of RNA polymerase II transcription subunit 31-B (med31-b) from Xenopus laevis (African clawed frog).